The sequence spans 479 residues: Hydrogenase-4 component D (479 aa).

15 helical membrane passes run 3–23, 30–50, 55–75, 80–100, 117–137, 168–188, 208–228, 238–258, 270–290, 300–320, 330–350, 369–389, 390–410, 411–431, and 458–478; these read NLAL…SFSP, WGVL…SAFY, VAVT…LVID, LILF…TGYL, AFLL…TLLG, ALLI…TLFL, LVYG…PMQA, TPIS…YIFA, VIGG…FLMY, LAWS…LSIF, IAYI…AGAL, LPLP…VPPF, NGFF…VEYW, ILLP…AWFI, and LVLI…ATWL.

Belongs to the complex I subunit 5 family.

Its subcellular location is the cell inner membrane. Functionally, possible component of hydrogenase 4. The protein is Hydrogenase-4 component D of Escherichia coli (strain K12).